The following is a 467-amino-acid chain: Chromosomal replication initiator protein DnaA (467 aa).

Residues 1-90 are domain I, interacts with DnaA modulators; that stretch reads MSLSLWQQCL…KPVTQTPQAA (90 aa). Residues 91–130 form a domain II region; sequence VTSNVAAPAQVAQTQPQRAAPSTRSGWDNVPAPAEPTYRS. The segment covering 98–111 has biased composition (low complexity); sequence PAQVAQTQPQRAAP. The segment at 98–119 is disordered; it reads PAQVAQTQPQRAAPSTRSGWDN. The tract at residues 131–347 is domain III, AAA+ region; that stretch reads NVNVKHTFDN…GALNRVIANA (217 aa). ATP is bound by residues G175, G177, K178, and T179. Residues 348–467 form a domain IV, binds dsDNA region; it reads NFTGRAITID…FSNLIRTLSS (120 aa).

Belongs to the DnaA family. In terms of assembly, oligomerizes as a right-handed, spiral filament on DNA at oriC.

It localises to the cytoplasm. Functionally, plays an essential role in the initiation and regulation of chromosomal replication. ATP-DnaA binds to the origin of replication (oriC) to initiate formation of the DNA replication initiation complex once per cell cycle. Binds the DnaA box (a 9 base pair repeat at the origin) and separates the double-stranded (ds)DNA. Forms a right-handed helical filament on oriC DNA; dsDNA binds to the exterior of the filament while single-stranded (ss)DNA is stabiized in the filament's interior. The ATP-DnaA-oriC complex binds and stabilizes one strand of the AT-rich DNA unwinding element (DUE), permitting loading of DNA polymerase. After initiation quickly degrades to an ADP-DnaA complex that is not apt for DNA replication. Binds acidic phospholipids. The chain is Chromosomal replication initiator protein DnaA from Shigella boydii serotype 4 (strain Sb227).